A 258-amino-acid polypeptide reads, in one-letter code: Acyl-[acyl-carrier-protein]--UDP-N-acetylglucosamine O-acyltransferase (258 aa).

The protein belongs to the transferase hexapeptide repeat family. LpxA subfamily. Homotrimer.

The protein resides in the cytoplasm. It carries out the reaction a (3R)-hydroxyacyl-[ACP] + UDP-N-acetyl-alpha-D-glucosamine = a UDP-3-O-[(3R)-3-hydroxyacyl]-N-acetyl-alpha-D-glucosamine + holo-[ACP]. Its pathway is glycolipid biosynthesis; lipid IV(A) biosynthesis; lipid IV(A) from (3R)-3-hydroxytetradecanoyl-[acyl-carrier-protein] and UDP-N-acetyl-alpha-D-glucosamine: step 1/6. Its function is as follows. Involved in the biosynthesis of lipid A, a phosphorylated glycolipid that anchors the lipopolysaccharide to the outer membrane of the cell. In Ectopseudomonas mendocina (strain ymp) (Pseudomonas mendocina), this protein is Acyl-[acyl-carrier-protein]--UDP-N-acetylglucosamine O-acyltransferase.